The primary structure comprises 525 residues: GMP synthase [glutamine-hydrolyzing] (525 aa).

In terms of domain architecture, Glutamine amidotransferase type-1 spans 9–207 (RILILDFGSQ…ILDICGCEAL (199 aa)). Cys-86 (nucleophile) is an active-site residue. Residues His-181 and Glu-183 contribute to the active site. In terms of domain architecture, GMPS ATP-PPase spans 208 to 400 (WTPSKIAEDA…LGLPYDMVYR (193 aa)). An ATP-binding site is contributed by 235 to 241 (SGGVDSS).

In terms of assembly, homodimer.

The enzyme catalyses XMP + L-glutamine + ATP + H2O = GMP + L-glutamate + AMP + diphosphate + 2 H(+). Its pathway is purine metabolism; GMP biosynthesis; GMP from XMP (L-Gln route): step 1/1. Its function is as follows. Catalyzes the synthesis of GMP from XMP. The polypeptide is GMP synthase [glutamine-hydrolyzing] (Pseudomonas savastanoi pv. phaseolicola (strain 1448A / Race 6) (Pseudomonas syringae pv. phaseolicola (strain 1448A / Race 6))).